The sequence spans 418 residues: Serine hydroxymethyltransferase (418 aa).

Residues L121 and 125–127 (GHL) each bind (6S)-5,6,7,8-tetrahydrofolate. The residue at position 230 (K230) is an N6-(pyridoxal phosphate)lysine. (6S)-5,6,7,8-tetrahydrofolate is bound at residue 356-358 (SPF).

Belongs to the SHMT family. In terms of assembly, homodimer. Requires pyridoxal 5'-phosphate as cofactor.

Its subcellular location is the cytoplasm. It catalyses the reaction (6R)-5,10-methylene-5,6,7,8-tetrahydrofolate + glycine + H2O = (6S)-5,6,7,8-tetrahydrofolate + L-serine. Its pathway is one-carbon metabolism; tetrahydrofolate interconversion. It participates in amino-acid biosynthesis; glycine biosynthesis; glycine from L-serine: step 1/1. Functionally, catalyzes the reversible interconversion of serine and glycine with tetrahydrofolate (THF) serving as the one-carbon carrier. This reaction serves as the major source of one-carbon groups required for the biosynthesis of purines, thymidylate, methionine, and other important biomolecules. Also exhibits THF-independent aldolase activity toward beta-hydroxyamino acids, producing glycine and aldehydes, via a retro-aldol mechanism. The sequence is that of Serine hydroxymethyltransferase from Shewanella sediminis (strain HAW-EB3).